The sequence spans 372 residues: tRNA-specific 2-thiouridylase MnmA 1 (372 aa).

ATP-binding positions include 26 to 33 and Met52; that span reads AISGGVDS. The active-site Nucleophile is Cys118. A disulfide bridge links Cys118 with Cys214. Gly142 serves as a coordination point for ATP. Positions 164–166 are interaction with tRNA; it reads KDQ. Catalysis depends on Cys214, which acts as the Cysteine persulfide intermediate.

The protein belongs to the MnmA/TRMU family.

The protein localises to the cytoplasm. The catalysed reaction is S-sulfanyl-L-cysteinyl-[protein] + uridine(34) in tRNA + AH2 + ATP = 2-thiouridine(34) in tRNA + L-cysteinyl-[protein] + A + AMP + diphosphate + H(+). Its function is as follows. Catalyzes the 2-thiolation of uridine at the wobble position (U34) of tRNA, leading to the formation of s(2)U34. This chain is tRNA-specific 2-thiouridylase MnmA 1, found in Syntrophus aciditrophicus (strain SB).